The primary structure comprises 130 residues: Peptidyl-prolyl cis-trans isomerase pin4 (130 aa).

Residues 1 to 38 form a disordered region; sequence MGKDKKASGSGSGSKGGKDAGNKDAGKDAGKASKGAQS. Basic and acidic residues predominate over residues 16–31; sequence GGKDAGNKDAGKDAGK. A PpiC domain is found at 36-128; it reads AQSINVRHIL…FGYHIIMVEG (93 aa).

Belongs to the PpiC/parvulin rotamase family. PIN4 subfamily.

The enzyme catalyses [protein]-peptidylproline (omega=180) = [protein]-peptidylproline (omega=0). PPIases accelerate the folding of proteins. It catalyzes the cis-trans isomerization of proline imidic peptide bonds in oligopeptides. This chain is Peptidyl-prolyl cis-trans isomerase pin4 (ppi-5), found in Neurospora crassa (strain ATCC 24698 / 74-OR23-1A / CBS 708.71 / DSM 1257 / FGSC 987).